Reading from the N-terminus, the 309-residue chain is NAD-dependent protein deacylase sirtuin-5A, mitochondrial (309 aa).

The transit peptide at 1–35 (MILLTFHTRRLVSHAYCGLKPASQKKSIALEMTRP) directs the protein to the mitochondrion. One can recognise a Deacetylase sirtuin-type domain in the interval 36–306 (SSNLADFREA…PPALARHETE (271 aa)). Residue 57-76 (GAGVSAESGVPTFRGAGGYW) participates in NAD(+) binding. Tyr101 and Arg104 together coordinate substrate. Residue 139–142 (QNID) participates in NAD(+) binding. The active-site Proton acceptor is His157. Zn(2+)-binding residues include Cys165, Cys168, Cys206, and Cys211. NAD(+) contacts are provided by residues 248–250 (GTS), 274–276 (NME), and Cys292.

This sequence belongs to the sirtuin family. Class III subfamily. Requires Zn(2+) as cofactor.

The protein localises to the mitochondrion. The protein resides in the cytoplasm. Its subcellular location is the cytosol. It localises to the nucleus. It catalyses the reaction N(6)-malonyl-L-lysyl-[protein] + NAD(+) + H2O = 2''-O-malonyl-ADP-D-ribose + nicotinamide + L-lysyl-[protein]. The catalysed reaction is N(6)-succinyl-L-lysyl-[protein] + NAD(+) + H2O = 2''-O-succinyl-ADP-D-ribose + nicotinamide + L-lysyl-[protein]. The enzyme catalyses N(6)-glutaryl-L-lysyl-[protein] + NAD(+) + H2O = 2''-O-glutaryl-ADP-D-ribose + nicotinamide + L-lysyl-[protein]. NAD-dependent lysine demalonylase, desuccinylase and deglutarylase that specifically removes malonyl, succinyl and glutaryl groups on target proteins. Has weak NAD-dependent protein deacetylase activity; however this activity may not be physiologically relevant in vivo. This is NAD-dependent protein deacylase sirtuin-5A, mitochondrial (sirt5-a) from Xenopus laevis (African clawed frog).